Reading from the N-terminus, the 324-residue chain is Deoxyhypusine hydroxylase (324 aa).

HEAT-like PBS-type repeat units follow at residues 60-86 and 94-119; these read LKHE…VLED and RHEA…YLHR. Residues His62, Glu63, His95, and Glu96 each coordinate Fe cation. Basic and acidic residues predominate over residues 143–152; sequence EERKQEKLRQ. A disordered region spans residues 143 to 171; it reads EERKQEKLRQSDFASVDPAPPMPEDDEKQ. HEAT-like PBS-type repeat units follow at residues 189–219, 227–253, and 260–287; these read KRYR…LAKG, FRHE…ALSN, and VRHE…FLHD. Positions 229, 230, 262, and 263 each coordinate Fe cation.

Belongs to the deoxyhypusine hydroxylase family. Fe(2+) is required as a cofactor.

The protein localises to the cytoplasm. The protein resides in the nucleus. The catalysed reaction is [eIF5A protein]-deoxyhypusine + AH2 + O2 = [eIF5A protein]-hypusine + A + H2O. The protein operates within protein modification; eIF5A hypusination. Its function is as follows. Catalyzes the hydroxylation of the N(6)-(4-aminobutyl)-L-lysine intermediate to form hypusine, an essential post-translational modification only found in mature eIF-5A factor. This chain is Deoxyhypusine hydroxylase (lia1), found in Neurospora crassa (strain ATCC 24698 / 74-OR23-1A / CBS 708.71 / DSM 1257 / FGSC 987).